Here is a 431-residue protein sequence, read N- to C-terminus: UDP-N-acetylglucosamine 1-carboxyvinyltransferase (431 aa).

25–26 (KN) lines the phosphoenolpyruvate pocket. Arginine 101 contacts UDP-N-acetyl-alpha-D-glucosamine. Residue cysteine 125 is the Proton donor of the active site. Cysteine 125 carries the post-translational modification 2-(S-cysteinyl)pyruvic acid O-phosphothioketal. Aspartate 317 and isoleucine 339 together coordinate UDP-N-acetyl-alpha-D-glucosamine.

The protein belongs to the EPSP synthase family. MurA subfamily.

The protein resides in the cytoplasm. The enzyme catalyses phosphoenolpyruvate + UDP-N-acetyl-alpha-D-glucosamine = UDP-N-acetyl-3-O-(1-carboxyvinyl)-alpha-D-glucosamine + phosphate. It functions in the pathway cell wall biogenesis; peptidoglycan biosynthesis. In terms of biological role, cell wall formation. Adds enolpyruvyl to UDP-N-acetylglucosamine. This is UDP-N-acetylglucosamine 1-carboxyvinyltransferase from Thermobifida fusca (strain YX).